The chain runs to 440 residues: Collagen alpha-1(XXVI) chain (440 aa).

The N-terminal stretch at 1 to 20 (MKLVLLLPWACCCLCGSALA) is a signal peptide. The EMI domain occupies 52 to 128 (RRHWCHHTVT…PGFTGSNCEE (77 aa)). 3 cysteine pairs are disulfide-bonded: C56–C118, C83–C89, and C117–C126. N70 is a glycosylation site (N-linked (GlcNAc...) asparagine). An N-linked (GlcNAc...) asparagine glycan is attached at N132. Disordered regions lie at residues 157–362 (EQPS…EGEG) and 390–440 (LASP…GDRK). The Collagen-like 1 domain maps to 199 to 267 (GPAGPPGQMG…PGPAGSPGLL (69 aa)). Composition is skewed to pro residues over residues 200–215 (PAGP…PAGP), 231–243 (VGPP…PGPR), and 252–261 (PGPPGPPGPA). Positions 269 to 281 (NTPQGVLYSLQTP) are enriched in polar residues. In terms of domain architecture, Collagen-like 2 spans 302 to 334 (GIPGPRGPPGPPGPPGPHGPPGPPGAPGSQGLV). Positions 306–327 (PRGPPGPPGPPGPHGPPGPPGA) are enriched in pro residues. Basic and acidic residues predominate over residues 347–356 (SVKEEEDKAS).

As to quaternary structure, homotrimer or heterotrimer. Post-translationally, hydroxylated on proline residues. In terms of processing, N-glycosylated. As to expression, specifically expressed in the testis and ovary in adult tissues.

The protein localises to the secreted. It localises to the extracellular space. The protein resides in the extracellular matrix. In Mus musculus (Mouse), this protein is Collagen alpha-1(XXVI) chain (Col26a1).